A 320-amino-acid chain; its full sequence is Lipoyl synthase (320 aa).

The [4Fe-4S] cluster site is built by C67, C72, C78, C93, C97, C100, and S307. The 218-residue stretch at 79–296 (FNHGTATFMI…RDKANEMGFE (218 aa)) folds into the Radical SAM core domain.

This sequence belongs to the radical SAM superfamily. Lipoyl synthase family. Requires [4Fe-4S] cluster as cofactor.

The protein resides in the cytoplasm. The enzyme catalyses [[Fe-S] cluster scaffold protein carrying a second [4Fe-4S](2+) cluster] + N(6)-octanoyl-L-lysyl-[protein] + 2 oxidized [2Fe-2S]-[ferredoxin] + 2 S-adenosyl-L-methionine + 4 H(+) = [[Fe-S] cluster scaffold protein] + N(6)-[(R)-dihydrolipoyl]-L-lysyl-[protein] + 4 Fe(3+) + 2 hydrogen sulfide + 2 5'-deoxyadenosine + 2 L-methionine + 2 reduced [2Fe-2S]-[ferredoxin]. The protein operates within protein modification; protein lipoylation via endogenous pathway; protein N(6)-(lipoyl)lysine from octanoyl-[acyl-carrier-protein]: step 2/2. Functionally, catalyzes the radical-mediated insertion of two sulfur atoms into the C-6 and C-8 positions of the octanoyl moiety bound to the lipoyl domains of lipoate-dependent enzymes, thereby converting the octanoylated domains into lipoylated derivatives. The protein is Lipoyl synthase of Haemophilus influenzae (strain ATCC 51907 / DSM 11121 / KW20 / Rd).